Reading from the N-terminus, the 504-residue chain is Paired zinc finger protein 1 (504 aa).

2 C2H2-type zinc fingers span residues 12–35 (LLCGICGKYFSDDESLREHRRQRH) and 39–62 (HMCLLCNRRIPENETLREHMKNKH). The C2H2-type 3; degenerate zinc finger occupies 68 to 91 (FICVCCNWSFGTEIYLKCHEECMK). Disordered stretches follow at residues 115–136 (ALNTDPQNGSDDVPHSSPSPVP) and 154–173 (IESADRSSASTSTPRTLVSG). Positions 159-172 (RSSASTSTPRTLVS) are enriched in polar residues. 2 consecutive C2H2-type zinc fingers follow at residues 179–202 (IPCGFCGKDFFHEGSLREHRRRFH) and 206–229 (HTCLLCNRQIPENETVRDHMKSQH). The C2H2-type 6; degenerate zinc-finger motif lies at 235 to 258 (YNCLCCNWTFLNQVHLISHKTCLK). The segment at 309–332 (LSCKSCGKFFYSERSLSKHHRQIH) adopts a C2H2-type 7 zinc-finger fold. A C2H2-type 8; degenerate zinc finger spans residues 365–389 (FNCRCCNWSFATRRCLMSHVECLKK).

As to expression, expressed in proximal gonad.

Its function is as follows. Possible transcriptional regulator. Involved in promoting segregation of chromosomes during meiosis, perhaps acting downstream of the let-60 RAS / mpk-1 MAPK signaling pathway. In Caenorhabditis elegans, this protein is Paired zinc finger protein 1.